Reading from the N-terminus, the 855-residue chain is DNA mismatch repair protein MutS (855 aa).

613-620 (GPNMGGKS) contacts ATP.

Belongs to the DNA mismatch repair MutS family.

This protein is involved in the repair of mismatches in DNA. It is possible that it carries out the mismatch recognition step. This protein has a weak ATPase activity. The polypeptide is DNA mismatch repair protein MutS (Azotobacter vinelandii (strain DJ / ATCC BAA-1303)).